A 273-amino-acid chain; its full sequence is Karrikin insensitive 2 receptor B (273 aa).

Catalysis depends on Ser95, which acts as the Nucleophile. Asp217 is a catalytic residue.

Belongs to the AB hydrolase superfamily. Expressed in stigma.

The protein localises to the nucleus. Its subcellular location is the cytoplasm. May be involved in plant olfaction during volatile communication. The polypeptide is Karrikin insensitive 2 receptor B (Petunia hybrida (Petunia)).